The following is a 96-amino-acid chain: Phosphoribosyl-ATP pyrophosphatase (96 aa).

It belongs to the PRA-PH family.

The protein resides in the cytoplasm. The enzyme catalyses 1-(5-phospho-beta-D-ribosyl)-ATP + H2O = 1-(5-phospho-beta-D-ribosyl)-5'-AMP + diphosphate + H(+). Its pathway is amino-acid biosynthesis; L-histidine biosynthesis; L-histidine from 5-phospho-alpha-D-ribose 1-diphosphate: step 2/9. The chain is Phosphoribosyl-ATP pyrophosphatase from Methanococcus maripaludis (strain C6 / ATCC BAA-1332).